Consider the following 375-residue polypeptide: Putative serine protease 47 (375 aa).

The signal sequence occupies residues 1-23 (MGYCQGVSQVAVVLLMFPKEKEA). A disordered region spans residues 41-60 (DGQLPMGPHSRASQVAPETT). Over residues 51-60 (RASQVAPETT) the composition is skewed to polar residues. The Peptidase S1 domain maps to 81 to 323 (IYGGRDAAAG…FINWIDEIMR (243 aa)). C106 and C122 are joined by a disulfide. Active-site charge relay system residues include H121 and D172. Residues N183 and N203 are each glycosylated (N-linked (GlcNAc...) asparagine). C206 and C281 are disulfide-bonded. S275 serves as the catalytic Charge relay system.

This sequence belongs to the peptidase S1 family.

It is found in the secreted. This chain is Putative serine protease 47 (PRSS47P), found in Homo sapiens (Human).